Reading from the N-terminus, the 216-residue chain is Small ribosomal subunit protein uS3 (216 aa).

Positions 38 to 108 constitute a KH type-2 domain; it reads LREFVKKKLH…DLAIDIQEVK (71 aa).

This sequence belongs to the universal ribosomal protein uS3 family. As to quaternary structure, part of the 30S ribosomal subunit. Forms a tight complex with proteins S10 and S14.

Binds the lower part of the 30S subunit head. Binds mRNA in the 70S ribosome, positioning it for translation. In Desulfosudis oleivorans (strain DSM 6200 / JCM 39069 / Hxd3) (Desulfococcus oleovorans), this protein is Small ribosomal subunit protein uS3.